A 291-amino-acid polypeptide reads, in one-letter code: Small ribosomal subunit biogenesis GTPase RsgA 2 (291 aa).

The CP-type G domain occupies 63-221; the sequence is ENALVRPPVA…VADTPGFSSI (159 aa). GTP contacts are provided by residues 112-115 and 164-172; these read SKMD and GQSGVGKST. Positions 245, 250, 252, and 258 each coordinate Zn(2+).

It belongs to the TRAFAC class YlqF/YawG GTPase family. RsgA subfamily. In terms of assembly, monomer. Associates with 30S ribosomal subunit, binds 16S rRNA. The cofactor is Zn(2+).

It is found in the cytoplasm. One of several proteins that assist in the late maturation steps of the functional core of the 30S ribosomal subunit. Helps release RbfA from mature subunits. May play a role in the assembly of ribosomal proteins into the subunit. Circularly permuted GTPase that catalyzes slow GTP hydrolysis, GTPase activity is stimulated by the 30S ribosomal subunit. In Listeria monocytogenes serovar 1/2a (strain ATCC BAA-679 / EGD-e), this protein is Small ribosomal subunit biogenesis GTPase RsgA 2.